Consider the following 303-residue polypeptide: Glycine--tRNA ligase alpha subunit (303 aa).

This sequence belongs to the class-II aminoacyl-tRNA synthetase family. As to quaternary structure, tetramer of two alpha and two beta subunits.

It localises to the cytoplasm. It carries out the reaction tRNA(Gly) + glycine + ATP = glycyl-tRNA(Gly) + AMP + diphosphate. In Helicobacter pylori (strain ATCC 700392 / 26695) (Campylobacter pylori), this protein is Glycine--tRNA ligase alpha subunit (glyQ).